The sequence spans 391 residues: Aspartic protease 17 (391 aa).

The N-terminal stretch at 1–15 (MHLIFLLFLAPFCSA) is a signal peptide. The Peptidase A1 domain occupies 65–385 (YLGNFTVGTP…DIGNARIGFA (321 aa)). The N-linked (GlcNAc...) asparagine glycan is linked to asparagine 68. Aspartate 83 is an active-site residue. Asparagine 108 carries N-linked (GlcNAc...) asparagine glycosylation. Aspartate 274 is a catalytic residue. The cysteines at positions 309 and 345 are disulfide-linked.

Belongs to the peptidase A1 family. In terms of tissue distribution, expressed in intestinal cells.

It localises to the secreted. Its function is as follows. Aspartic proteinase. The polypeptide is Aspartic protease 17 (Caenorhabditis elegans).